We begin with the raw amino-acid sequence, 146 residues long: Large ribosomal subunit protein uL15 (146 aa).

Residues 1-66 (MKLHELKPAP…LQRRMPKRGF (66 aa)) are disordered. 2 stretches are compositionally biased toward gly residues: residues 21-31 (QGIGSGMGKTA) and 42-52 (SGGGVRPGFEG).

It belongs to the universal ribosomal protein uL15 family. Part of the 50S ribosomal subunit.

Functionally, binds to the 23S rRNA. The sequence is that of Large ribosomal subunit protein uL15 from Pelotomaculum thermopropionicum (strain DSM 13744 / JCM 10971 / SI).